Here is a 413-residue protein sequence, read N- to C-terminus: Probable protein phosphatase 2C 78 (413 aa).

Positions 21 to 40 (KKATTTTRRRERSSSQAARR) are disordered. Residues 111–409 (KYGVASVCGR…DNVSVVVVDL (299 aa)) enclose the PPM-type phosphatase domain. Mn(2+) contacts are provided by D153, G154, D327, and D400.

This sequence belongs to the PP2C family. The cofactor is Mg(2+). Mn(2+) is required as a cofactor.

It localises to the golgi apparatus. It is found in the nucleus. It carries out the reaction O-phospho-L-seryl-[protein] + H2O = L-seryl-[protein] + phosphate. The catalysed reaction is O-phospho-L-threonyl-[protein] + H2O = L-threonyl-[protein] + phosphate. Its function is as follows. Acts as a negative regulator of abscisic acid (ABA) signaling for stomatal closure in leaves, and controls water loss during leaf senescence. Activated by the NAC029/NAP transcription factor during ABA signaling in senescing leaves. Functions as a negative regulator of osmotic stress and ABA signaling. Acts as a negative regulator of response to drought. The polypeptide is Probable protein phosphatase 2C 78 (Arabidopsis thaliana (Mouse-ear cress)).